A 442-amino-acid chain; its full sequence is Probable glycine dehydrogenase (decarboxylating) subunit 1 (442 aa).

This sequence belongs to the GcvP family. N-terminal subunit subfamily. As to quaternary structure, the glycine cleavage system is composed of four proteins: P, T, L and H. In this organism, the P 'protein' is a heterodimer of two subunits.

It catalyses the reaction N(6)-[(R)-lipoyl]-L-lysyl-[glycine-cleavage complex H protein] + glycine + H(+) = N(6)-[(R)-S(8)-aminomethyldihydrolipoyl]-L-lysyl-[glycine-cleavage complex H protein] + CO2. Functionally, the glycine cleavage system catalyzes the degradation of glycine. The P protein binds the alpha-amino group of glycine through its pyridoxal phosphate cofactor; CO(2) is released and the remaining methylamine moiety is then transferred to the lipoamide cofactor of the H protein. The polypeptide is Probable glycine dehydrogenase (decarboxylating) subunit 1 (Geotalea daltonii (strain DSM 22248 / JCM 15807 / FRC-32) (Geobacter daltonii)).